We begin with the raw amino-acid sequence, 174 residues long: Protein TM_1551 (174 aa).

The 173-residue stretch at 2–174 folds into the AMMECR1 domain; it reads IGEHPYVKWA…IYRFTVERYK (173 aa).

This is Protein TM_1551 from Thermotoga maritima (strain ATCC 43589 / DSM 3109 / JCM 10099 / NBRC 100826 / MSB8).